We begin with the raw amino-acid sequence, 377 residues long: uncharacterized protein (377 aa).

The next 4 helical transmembrane spans lie at 26–46, 67–87, 108–128, and 135–155; these read TFQNYLLILSMIVSIAVVVAI, TVGSILATISALLVSISWVII, FLTFVVISFTTVFLFILISLT, and IDYGIIYYVIMLNFLMYALYI.

The protein localises to the cell membrane. This is an uncharacterized protein from Methanocaldococcus jannaschii (strain ATCC 43067 / DSM 2661 / JAL-1 / JCM 10045 / NBRC 100440) (Methanococcus jannaschii).